Reading from the N-terminus, the 132-residue chain is Fatty acid-binding protein, adipocyte (132 aa).

C2 carries the post-translational modification N-acetylcysteine. A Phosphoserine modification is found at S13. Phosphotyrosine; by Tyr-kinases is present on Y20. The Nuclear localization signal motif lies at 22–32; the sequence is KEVGVGFATRK. 127 to 129 is an a fatty acid binding site; that stretch reads RVY.

It belongs to the calycin superfamily. Fatty-acid binding protein (FABP) family. In terms of assembly, monomer. Homodimer. Interacts with PPARG.

The protein resides in the cytoplasm. It localises to the nucleus. Functionally, lipid transport protein in adipocytes. Binds both long chain fatty acids and retinoic acid. Delivers long-chain fatty acids and retinoic acid to their cognate receptors in the nucleus. FABPs are important elements related to the hibernating state in mammals. The sequence is that of Fatty acid-binding protein, adipocyte (FABP4) from Ictidomys tridecemlineatus (Thirteen-lined ground squirrel).